We begin with the raw amino-acid sequence, 308 residues long: HTH-type transcriptional activator AllS (308 aa).

Residues 2–59 enclose the HTH lysR-type domain; that stretch reads FDPETLRTFISVAETGSFSKAAERLCKTTATISYRIKLLEENTGVGLFFRTTRSVSLT. The H-T-H motif DNA-binding region spans 19 to 38; the sequence is FSKAAERLCKTTATISYRIK.

The protein belongs to the LysR transcriptional regulatory family.

Its function is as follows. Positive regulator essential for the expression of allD operon. Binds to the allD promoter. The polypeptide is HTH-type transcriptional activator AllS (allS) (Salmonella paratyphi A (strain ATCC 9150 / SARB42)).